The chain runs to 184 residues: Glutathione-regulated potassium-efflux system ancillary protein KefG (184 aa).

This sequence belongs to the NAD(P)H dehydrogenase (quinone) family. KefG subfamily. In terms of assembly, interacts with KefB.

It is found in the cell inner membrane. It carries out the reaction a quinone + NADH + H(+) = a quinol + NAD(+). The enzyme catalyses a quinone + NADPH + H(+) = a quinol + NADP(+). In terms of biological role, regulatory subunit of a potassium efflux system that confers protection against electrophiles. Required for full activity of KefB. The polypeptide is Glutathione-regulated potassium-efflux system ancillary protein KefG (Escherichia coli O1:K1 / APEC).